The chain runs to 92 residues: Small ribosomal subunit protein uS19 (92 aa).

Belongs to the universal ribosomal protein uS19 family.

Functionally, protein S19 forms a complex with S13 that binds strongly to the 16S ribosomal RNA. The protein is Small ribosomal subunit protein uS19 of Rhodospirillum rubrum (strain ATCC 11170 / ATH 1.1.1 / DSM 467 / LMG 4362 / NCIMB 8255 / S1).